We begin with the raw amino-acid sequence, 417 residues long: Inactive GDSL esterase/lipase-like protein 25 (417 aa).

Residues 1 to 50 (MLLIPSFTANSNEPPPSKLSLSDLSMAILKSHFFLLFPLLLLHFHTVSFA) form the signal peptide. N-linked (GlcNAc...) asparagine glycans are attached at residues asparagine 160, asparagine 308, and asparagine 311. The active site involves histidine 331.

The protein belongs to the 'GDSL' lipolytic enzyme family. As to quaternary structure, interacts with the PYK10 complex and TGG2, but not with TGG1 or PEN2. Expressed throughout the seedling, rosette leaves, roots, inflorescence and imbibed seed, but not in pollen.

It is found in the vacuole. Its subcellular location is the endoplasmic reticulum. Functionally, involved in organization of the endomembrane system and is required for endoplasmic reticulum morphology and organelle distribution. May act by inhibiting the formation of PYK10 complex by binding to GLL23 and exporting it from the ER. Required for proper subcellular localization of myrosinase TGG2. Has no lipase or esterase activity. The sequence is that of Inactive GDSL esterase/lipase-like protein 25 (MVP1) from Arabidopsis thaliana (Mouse-ear cress).